We begin with the raw amino-acid sequence, 346 residues long: Inositol 2-dehydrogenase/D-chiro-inositol 3-dehydrogenase (346 aa).

The protein belongs to the Gfo/Idh/MocA family. In terms of assembly, homotetramer.

It catalyses the reaction myo-inositol + NAD(+) = scyllo-inosose + NADH + H(+). It carries out the reaction 1D-chiro-inositol + NAD(+) = scyllo-inosine + NADH + H(+). It functions in the pathway polyol metabolism; myo-inositol degradation into acetyl-CoA; acetyl-CoA from myo-inositol: step 1/7. In terms of biological role, involved in the oxidation of myo-inositol (MI) and D-chiro-inositol (DCI) to 2-keto-myo-inositol (2KMI or 2-inosose) and 1-keto-D-chiro-inositol (1KDCI), respectively. This chain is Inositol 2-dehydrogenase/D-chiro-inositol 3-dehydrogenase, found in Lacticaseibacillus casei (Lactobacillus casei).